Here is a 261-residue protein sequence, read N- to C-terminus: 5'-nucleotidase SurE (261 aa).

Positions 8, 9, 39, and 91 each coordinate a divalent metal cation.

This sequence belongs to the SurE nucleotidase family. The cofactor is a divalent metal cation.

The protein resides in the cytoplasm. The enzyme catalyses a ribonucleoside 5'-phosphate + H2O = a ribonucleoside + phosphate. Its function is as follows. Nucleotidase that shows phosphatase activity on nucleoside 5'-monophosphates. The chain is 5'-nucleotidase SurE from Polaromonas sp. (strain JS666 / ATCC BAA-500).